The primary structure comprises 122 residues: Protein FLORAL ORGAN NUMBER2 (122 aa).

The signal sequence occupies residues 1-25 (MGRLFLCLVVAWCWVALLLVAPVHG). The disordered stretch occupies residues 28–122 (GLPGEFSGDQ…PEHARSTGRP (95 aa)). The span at 54-63 (KQPRGVKGTR) shows a compositional bias: basic residues. Low complexity predominate over residues 64–77 (RPSWSSWSSTASRS). The segment covering 111 to 122 (RRPEHARSTGRP) has biased composition (basic and acidic residues).

It belongs to the CLV3/ESR signal peptide family.

The protein resides in the secreted. Functionally, probable extracellular signal that regulates meristem maintenance. May function as a putative ligand for a receptor complex including FON1. Regulates the size of the floral meristem and the number of floral organs. This is Protein FLORAL ORGAN NUMBER2 (FON2) from Oryza sativa subsp. indica (Rice).